Reading from the N-terminus, the 643-residue chain is Extracellular metalloproteinase 4 (643 aa).

The N-terminal stretch at M1–A18 is a signal peptide. A propeptide spanning residues H19 to A254 is cleaved from the precursor. Basic and acidic residues predominate over residues T47 to D57. Residues T47–S71 are disordered. Polar residues predominate over residues F60–S71. 2 N-linked (GlcNAc...) asparagine glycosylation sites follow: N271 and N420. Residue H437 coordinates Zn(2+). E438 is a catalytic residue. Residue H441 participates in Zn(2+) binding. N-linked (GlcNAc...) asparagine glycans are attached at residues N510 and N553.

This sequence belongs to the peptidase M36 family. Zn(2+) is required as a cofactor.

It is found in the secreted. In terms of biological role, secreted metalloproteinase probably acting as a virulence factor. In Arthroderma benhamiae (Trichophyton mentagrophytes), this protein is Extracellular metalloproteinase 4 (MEP4).